We begin with the raw amino-acid sequence, 194 residues long: Imidazoleglycerol-phosphate dehydratase (194 aa).

The protein belongs to the imidazoleglycerol-phosphate dehydratase family.

The protein localises to the cytoplasm. It carries out the reaction D-erythro-1-(imidazol-4-yl)glycerol 3-phosphate = 3-(imidazol-4-yl)-2-oxopropyl phosphate + H2O. It functions in the pathway amino-acid biosynthesis; L-histidine biosynthesis; L-histidine from 5-phospho-alpha-D-ribose 1-diphosphate: step 6/9. The polypeptide is Imidazoleglycerol-phosphate dehydratase (Lacticaseibacillus casei (strain BL23) (Lactobacillus casei)).